We begin with the raw amino-acid sequence, 234 residues long: Peptidase E (234 aa).

Active-site charge relay system residues include Ser-123, Asp-138, and His-160.

Belongs to the peptidase S51 family.

The protein resides in the cytoplasm. The enzyme catalyses Dipeptidase E catalyzes the hydrolysis of dipeptides Asp-|-Xaa. It does not act on peptides with N-terminal Glu, Asn or Gln, nor does it cleave isoaspartyl peptides.. Hydrolyzes dipeptides containing N-terminal aspartate residues. May play a role in allowing the cell to use peptide aspartate to spare carbon otherwise required for the synthesis of the aspartate family of amino acids. This chain is Peptidase E, found in Actinobacillus pleuropneumoniae serotype 7 (strain AP76).